Reading from the N-terminus, the 215-residue chain is uncharacterized protein (215 aa).

It to T.pallidum TP_0127, TP_0618 and TP_0619.

This is an uncharacterized protein from Treponema pallidum (strain Nichols).